Reading from the N-terminus, the 324-residue chain is Glyoxylate/hydroxypyruvate reductase B (324 aa).

Active-site residues include Arg-237 and Glu-266. The active-site Proton donor is the His-285.

Belongs to the D-isomer specific 2-hydroxyacid dehydrogenase family. GhrB subfamily. Homodimer.

Its subcellular location is the cytoplasm. It carries out the reaction glycolate + NADP(+) = glyoxylate + NADPH + H(+). It catalyses the reaction (R)-glycerate + NAD(+) = 3-hydroxypyruvate + NADH + H(+). The catalysed reaction is (R)-glycerate + NADP(+) = 3-hydroxypyruvate + NADPH + H(+). Its function is as follows. Catalyzes the NADPH-dependent reduction of glyoxylate and hydroxypyruvate into glycolate and glycerate, respectively. This Enterobacter sp. (strain 638) protein is Glyoxylate/hydroxypyruvate reductase B.